A 188-amino-acid polypeptide reads, in one-letter code: Probable nicotinate-nucleotide adenylyltransferase (188 aa).

This sequence belongs to the NadD family.

The catalysed reaction is nicotinate beta-D-ribonucleotide + ATP + H(+) = deamido-NAD(+) + diphosphate. The protein operates within cofactor biosynthesis; NAD(+) biosynthesis; deamido-NAD(+) from nicotinate D-ribonucleotide: step 1/1. Its function is as follows. Catalyzes the reversible adenylation of nicotinate mononucleotide (NaMN) to nicotinic acid adenine dinucleotide (NaAD). The polypeptide is Probable nicotinate-nucleotide adenylyltransferase (Solibacter usitatus (strain Ellin6076)).